The primary structure comprises 365 residues: Protein RecA (365 aa).

An ATP-binding site is contributed by 73–80; that stretch reads GPESSGKT.

It belongs to the RecA family.

The protein localises to the cytoplasm. Can catalyze the hydrolysis of ATP in the presence of single-stranded DNA, the ATP-dependent uptake of single-stranded DNA by duplex DNA, and the ATP-dependent hybridization of homologous single-stranded DNAs. It interacts with LexA causing its activation and leading to its autocatalytic cleavage. The chain is Protein RecA from Prochlorococcus marinus (strain MIT 9301).